Consider the following 238-residue polypeptide: MLMDVFSSFDAHSYNLIWLSMPLWLLSSMVPMTVLFSDVHSKSGSTSSFRSLVLSFTYSMIRLNGKGLKLSGFPLVMSGLFMMILMLNLSGNFPFFFPVSGQFVFGFSFALSIWTCLVLSSLLCSFEQGLMSLVPTGCPLILVPFMVVVELISGMLRPLTLVLRLTLNLGAGKVILTMCSSELVVGWLNSSSLITGVGGIKGLLMGGGVFGAAEVAIACIQCYIFCVLLCLYTEDHSS.

A run of 5 helical transmembrane segments spans residues 16–36 (LIWL…TVLF), 79–99 (GLFM…FFPV), 103–123 (FVFG…SSLL), 129–149 (GLMS…MVVV), and 209–229 (VFGA…CVLL).

The protein belongs to the ATPase A chain family. F-type ATPases have 2 components, CF(1) - the catalytic core - and CF(0) - the membrane proton channel. CF(1) has five subunits: alpha(3), beta(3), gamma(1), delta(1), epsilon(1). CF(0) has three main subunits: a, b and c.

The protein localises to the mitochondrion inner membrane. In terms of biological role, mitochondrial membrane ATP synthase (F(1)F(0) ATP synthase or Complex V) produces ATP from ADP in the presence of a proton gradient across the membrane which is generated by electron transport complexes of the respiratory chain. F-type ATPases consist of two structural domains, F(1) - containing the extramembraneous catalytic core and F(0) - containing the membrane proton channel, linked together by a central stalk and a peripheral stalk. During catalysis, ATP synthesis in the catalytic domain of F(1) is coupled via a rotary mechanism of the central stalk subunits to proton translocation. Key component of the proton channel; it may play a direct role in the translocation of protons across the membrane. This is ATP synthase subunit a (ATP6) from Mytilus edulis (Blue mussel).